Consider the following 390-residue polypeptide: Ankyrin repeat domain-containing protein 63 (390 aa).

ANK repeat units follow at residues 11-40, 46-79, 83-112, 116-145, and 153-182; these read AGTRTFLEAMQAGKVHLARFVLDALDRSII, QGRTPLMVAVGLPDPAMRSRFVRLLLEQGAAVNL, RGRTALSLACERGHLDAVQLLVQFSGDPEA, AGNSPVMWAAACGHGAVLEFLVRSFRRLGL, and AGLTALQLAASRGHGTCVQALTGPWGRAAA. 2 disordered regions span residues 181 to 213 and 226 to 245; these read AAAAAARGSNSDSPPGHPAPAPSPERRRPSPRR and AGGHGHGHGHGHGHGGELAS. At S193 the chain carries Phosphoserine. Residue S304 is modified to Phosphoserine. The interval 320–377 is disordered; it reads VGLSPHPEGCPGSGRLGLRRRSTAPDIPSLVGEASGPESGPELENNALPFSVPGPKPW.

The protein is Ankyrin repeat domain-containing protein 63 of Mus musculus (Mouse).